The sequence spans 885 residues: Ankyrin repeat and SAM domain-containing protein 6 (885 aa).

ANK repeat units follow at residues 8–37, 68–97, 101–130, 134–163, 181–210, 215–244, 282–312, 316–345, 350–379, and 383–414; these read PGLQ…EPVA, AGNS…SVNS, YGWS…DVNA, LGAS…TVDH, LGIT…DPNH, VGWS…NPDH, KRRP…HVNL, DGAT…DMNK, HGWT…DVTL, and NGYT…QVNK. N129 carries the 3-hydroxyasparagine modification. Disordered regions lie at residues 415-439, 491-522, 563-775, and 855-885; these read DRGG…SIPM, MRAP…PRRE, SSDR…ITDE, and FESS…SSRR. Low complexity predominate over residues 608-640; the sequence is PSISRSPTSPASSGNFNHSPHSSGGASGVGSMS. S650 carries the post-translational modification Phosphoserine. Residues 650–662 are compositionally biased toward polar residues; that stretch reads SGGSVDSVLSQIA. Low complexity-rich tracts occupy residues 689–713 and 722–739; these read GSSP…TSSS and PPSG…TLTP. S734 and S742 each carry phosphoserine. Residues 750–770 show a composition bias toward low complexity; that stretch reads SSVSSSSSHRQSKSSGGSSSG. The 64-residue stretch at 773-836 folds into the SAM domain; it reads TDEDELTGIL…LAAISELNAG (64 aa). The span at 855-865 shows a compositional bias: polar residues; it reads FESSASNTRAP. Residues 876 to 885 show a composition bias toward basic and acidic residues; sequence RPEETVSSRR.

As to quaternary structure, homooligomer. Interacts with NEK8. Central component of a complex containing at least ANKS6, INVS, NEK8 and NPHP3. ANKS6 may organize complex assembly by linking INVS and NPHP3 to NEK8 and INVS may target the complex to the proximal ciliary axoneme. Interacts (via SAM domain) with BICC1 (via KH domains) in an RNA-dependent manner. Interacts (via SAM domain) with ANKS3 (via SAM domain). In terms of processing, hydroxylated at Asn-129, most probably by HIF1AN. This hydroxylation results in decreased NEK8-binding. Widely expressed with moderate level in brain, skeletal muscle and testis. Expressed in renal tubules.

It is found in the cell projection. The protein resides in the cilium. It localises to the cytoplasm. In terms of biological role, required for renal function. This is Ankyrin repeat and SAM domain-containing protein 6 (Anks6) from Rattus norvegicus (Rat).